Here is a 118-residue protein sequence, read N- to C-terminus: UPF0295 protein BCE_0593 (118 aa).

Transmembrane regions (helical) follow at residues 12–32 (IRTF…LGVF) and 43–63 (FMMV…WIGM).

Belongs to the UPF0295 family.

Its subcellular location is the cell membrane. The chain is UPF0295 protein BCE_0593 from Bacillus cereus (strain ATCC 10987 / NRS 248).